Consider the following 205-residue polypeptide: Ras-related protein RABD1 (205 aa).

Serine 2 is subject to N-acetylserine. Residues 15–23 (GDSSVGKSC), 33–40 (YIDSYIST), 63–67 (DTAGQ), 121–124 (NKND), and 151–153 (SAK) each bind GTP. The Effector region motif lies at 37–45 (YISTIGVDF). Composition is skewed to polar residues over residues 174–186 (GSQT…SGPG) and 194–205 (PIQQNNGGCCGQ). The segment at 174–205 (GSQTNANKTSGPGTVQMKGQPIQQNNGGCCGQ) is disordered. 2 S-geranylgeranyl cysteine lipidation sites follow: cysteine 202 and cysteine 203.

This sequence belongs to the small GTPase superfamily. Rab family. In terms of assembly, does not interact with GC5. Interacts with XI-2/MYA2.

It localises to the golgi apparatus. It is found in the trans-Golgi network membrane. The protein resides in the golgi apparatus membrane. Its function is as follows. Protein transport. Regulator of membrane traffic from the Golgi apparatus towards the endoplasmic reticulum (ER). The sequence is that of Ras-related protein RABD1 (RABD1) from Arabidopsis thaliana (Mouse-ear cress).